The chain runs to 526 residues: Catalase (526 aa).

The span at 1–22 shows a compositional bias: basic and acidic residues; it reads MADDREKSTDQMKLWKEGRGSQ. A disordered region spans residues 1 to 29; sequence MADDREKSTDQMKLWKEGRGSQRPDVLTT. Active-site residues include histidine 75 and asparagine 148. NADP(+)-binding residues include histidine 194, serine 201, arginine 203, asparagine 213, lysine 237, tryptophan 303, histidine 305, and lysine 306. Tyrosine 358 lines the heme pocket.

Belongs to the catalase family. As to quaternary structure, homotetramer. The cofactor is heme. NADP(+) serves as cofactor.

It is found in the peroxisome matrix. It carries out the reaction 2 H2O2 = O2 + 2 H2O. In terms of biological role, catalyzes the degradation of hydrogen peroxide (H(2)O(2)) generated by peroxisomal oxidases to water and oxygen, thereby protecting cells from the toxic effects of hydrogen peroxide. The protein is Catalase (cat) of Danio rerio (Zebrafish).